A 350-amino-acid polypeptide reads, in one-letter code: GTPase Obg (350 aa).

Residues 1 to 159 (MKLVDEAEIE…RTLKLELKLL (159 aa)) form the Obg domain. The interval 126-147 (GNMHFKSSTNRSPRQALPGEPG) is disordered. One can recognise an OBG-type G domain in the interval 160–337 (ADVGLLGFPN…IMSRIMAFFD (178 aa)). Residues 166-173 (GFPNAGKS), 191-195 (FTTLY), 213-216 (DIPG), 287-290 (NKAD), and 318-320 (SAL) contribute to the GTP site. Mg(2+) is bound by residues serine 173 and threonine 193.

The protein belongs to the TRAFAC class OBG-HflX-like GTPase superfamily. OBG GTPase family. In terms of assembly, monomer. Mg(2+) serves as cofactor.

It localises to the cytoplasm. An essential GTPase which binds GTP, GDP and possibly (p)ppGpp with moderate affinity, with high nucleotide exchange rates and a fairly low GTP hydrolysis rate. Plays a role in control of the cell cycle, stress response, ribosome biogenesis and in those bacteria that undergo differentiation, in morphogenesis control. The polypeptide is GTPase Obg (Stenotrophomonas maltophilia (strain K279a)).